Reading from the N-terminus, the 255-residue chain is NADH dehydrogenase [ubiquinone] flavoprotein 2, mitochondrial (255 aa).

The transit peptide at 1–35 (MLARLAAKRLLEIRQVFRQPTSQVTRSLSTALNYH) directs the protein to the mitochondrion. [2Fe-2S] cluster contacts are provided by cysteine 130, cysteine 135, cysteine 171, and cysteine 175. A disordered region spans residues 214–255 (RKGEKPPHGTQNPKRIKCGPEGGNKTLLGEPKPPQFRDLDAC).

Belongs to the complex I 24 kDa subunit family. As to quaternary structure, complex I is composed of at least 49 different subunits. This is a component of the flavoprotein-sulfur (FP) fragment of the enzyme. [2Fe-2S] cluster serves as cofactor.

It is found in the mitochondrion inner membrane. The catalysed reaction is a ubiquinone + NADH + 5 H(+)(in) = a ubiquinol + NAD(+) + 4 H(+)(out). In terms of biological role, core subunit of the mitochondrial membrane respiratory chain NADH dehydrogenase (Complex I) that is believed to belong to the minimal assembly required for catalysis. Complex I functions in the transfer of electrons from NADH to the respiratory chain. The immediate electron acceptor for the enzyme is believed to be ubiquinone. The polypeptide is NADH dehydrogenase [ubiquinone] flavoprotein 2, mitochondrial (Arabidopsis thaliana (Mouse-ear cress)).